Consider the following 149-residue polypeptide: Transcriptional repressor NrdR (149 aa).

A zinc finger lies at cysteine 3 to cysteine 34. In terms of domain architecture, ATP-cone spans proline 49–glutamate 139.

It belongs to the NrdR family. Requires Zn(2+) as cofactor.

In terms of biological role, negatively regulates transcription of bacterial ribonucleotide reductase nrd genes and operons by binding to NrdR-boxes. This chain is Transcriptional repressor NrdR, found in Actinobacillus pleuropneumoniae serotype 5b (strain L20).